We begin with the raw amino-acid sequence, 337 residues long: Tetraacyldisaccharide 4'-kinase (337 aa).

51-58 (HVGGAGKT) is an ATP binding site.

The protein belongs to the LpxK family.

The catalysed reaction is a lipid A disaccharide + ATP = a lipid IVA + ADP + H(+). It functions in the pathway glycolipid biosynthesis; lipid IV(A) biosynthesis; lipid IV(A) from (3R)-3-hydroxytetradecanoyl-[acyl-carrier-protein] and UDP-N-acetyl-alpha-D-glucosamine: step 6/6. In terms of biological role, transfers the gamma-phosphate of ATP to the 4'-position of a tetraacyldisaccharide 1-phosphate intermediate (termed DS-1-P) to form tetraacyldisaccharide 1,4'-bis-phosphate (lipid IVA). The protein is Tetraacyldisaccharide 4'-kinase of Afipia carboxidovorans (strain ATCC 49405 / DSM 1227 / KCTC 32145 / OM5) (Oligotropha carboxidovorans).